A 390-amino-acid chain; its full sequence is Phosphoglycerate kinase (390 aa).

Substrate is bound by residues 21-23, Arg36, 59-62, Arg113, and Arg146; these read DMN and HLGR. ATP contacts are provided by residues Lys197, Glu319, and 345-348; that span reads GGDT.

It belongs to the phosphoglycerate kinase family. In terms of assembly, monomer.

It is found in the cytoplasm. The enzyme catalyses (2R)-3-phosphoglycerate + ATP = (2R)-3-phospho-glyceroyl phosphate + ADP. The protein operates within carbohydrate degradation; glycolysis; pyruvate from D-glyceraldehyde 3-phosphate: step 2/5. The sequence is that of Phosphoglycerate kinase from Laribacter hongkongensis (strain HLHK9).